Here is a 149-residue protein sequence, read N- to C-terminus: Deoxyuridine 5'-triphosphate nucleotidohydrolase (149 aa).

Residues Arg-68 to Gly-70, Asn-81, and Leu-85 to Asp-87 contribute to the substrate site.

Belongs to the dUTPase family. Requires Mg(2+) as cofactor.

The enzyme catalyses dUTP + H2O = dUMP + diphosphate + H(+). It participates in pyrimidine metabolism; dUMP biosynthesis; dUMP from dCTP (dUTP route): step 2/2. Its function is as follows. This enzyme is involved in nucleotide metabolism: it produces dUMP, the immediate precursor of thymidine nucleotides and it decreases the intracellular concentration of dUTP so that uracil cannot be incorporated into DNA. In Nitrosomonas eutropha (strain DSM 101675 / C91 / Nm57), this protein is Deoxyuridine 5'-triphosphate nucleotidohydrolase.